A 341-amino-acid chain; its full sequence is Uroporphyrinogen decarboxylase (341 aa).

Substrate-binding positions include 23–27 (RQAGR), F42, D73, Y148, S203, and H318.

Belongs to the uroporphyrinogen decarboxylase family. As to quaternary structure, homodimer.

It localises to the cytoplasm. The enzyme catalyses uroporphyrinogen III + 4 H(+) = coproporphyrinogen III + 4 CO2. The protein operates within porphyrin-containing compound metabolism; protoporphyrin-IX biosynthesis; coproporphyrinogen-III from 5-aminolevulinate: step 4/4. Catalyzes the decarboxylation of four acetate groups of uroporphyrinogen-III to yield coproporphyrinogen-III. The polypeptide is Uroporphyrinogen decarboxylase (Brucella melitensis biotype 1 (strain ATCC 23456 / CCUG 17765 / NCTC 10094 / 16M)).